The following is a 182-amino-acid chain: Isopentenyl-diphosphate Delta-isomerase (182 aa).

Mn(2+) is bound by residues His25 and His32. The Nudix hydrolase domain occupies 30–164 (LLHLAFSSWL…PWAFSPWMVM (135 aa)). The active site involves Cys67. Cys67 contributes to the Mg(2+) binding site. Residue His69 coordinates Mn(2+). Residue Glu87 participates in Mg(2+) binding. Glu114 and Glu116 together coordinate Mn(2+). Residue Glu116 is part of the active site.

Belongs to the IPP isomerase type 1 family. Homodimer. Mg(2+) serves as cofactor. Requires Mn(2+) as cofactor.

The protein resides in the cytoplasm. It catalyses the reaction isopentenyl diphosphate = dimethylallyl diphosphate. Its pathway is isoprenoid biosynthesis; dimethylallyl diphosphate biosynthesis; dimethylallyl diphosphate from isopentenyl diphosphate: step 1/1. Its function is as follows. Catalyzes the 1,3-allylic rearrangement of the homoallylic substrate isopentenyl (IPP) to its highly electrophilic allylic isomer, dimethylallyl diphosphate (DMAPP). The chain is Isopentenyl-diphosphate Delta-isomerase from Escherichia coli O6:H1 (strain CFT073 / ATCC 700928 / UPEC).